The primary structure comprises 200 residues: ATP-dependent Clp protease proteolytic subunit 3 (200 aa).

Residue Ser-101 is the Nucleophile of the active site. His-126 is a catalytic residue.

It belongs to the peptidase S14 family. As to quaternary structure, fourteen ClpP subunits assemble into 2 heptameric rings which stack back to back to give a disk-like structure with a central cavity, resembling the structure of eukaryotic proteasomes.

Its subcellular location is the cytoplasm. It catalyses the reaction Hydrolysis of proteins to small peptides in the presence of ATP and magnesium. alpha-casein is the usual test substrate. In the absence of ATP, only oligopeptides shorter than five residues are hydrolyzed (such as succinyl-Leu-Tyr-|-NHMec, and Leu-Tyr-Leu-|-Tyr-Trp, in which cleavage of the -Tyr-|-Leu- and -Tyr-|-Trp bonds also occurs).. Functionally, cleaves peptides in various proteins in a process that requires ATP hydrolysis. Has a chymotrypsin-like activity. Plays a major role in the degradation of misfolded proteins. This chain is ATP-dependent Clp protease proteolytic subunit 3, found in Synechococcus sp. (strain CC9902).